The chain runs to 470 residues: Aminoacyl transferase sphA (470 aa).

3 residues coordinate pyridoxal 5'-phosphate: S212, H244, and T272. K275 is modified (N6-(pyridoxal phosphate)lysine).

Belongs to the class-II pyridoxal-phosphate-dependent aminotransferase family. BioF subfamily. In terms of assembly, homodimer. It depends on pyridoxal 5'-phosphate as a cofactor.

It catalyses the reaction aminomalonate + (3R)-hydroxyoctadeca-4,10-dienoyl-[ACP] = 3-oxopresphingofungin + holo-[ACP] + CO2. Its pathway is secondary metabolite biosynthesis. Aminoacyl transferase; part of the gene cluster that mediates the biosynthesis of sphingofungins, bioactive molecules acting as sphingolipid inhibitors via inhibiting serine palmitoyl transferase (SPT). Within the pathway, sphA transfers aminomalonate onto the sphB product 3-hydroxyoctadeca-4,10-dienoyl-ACP to produce 3-keto-presphingofungin. The substrate specificity of sphA using only aminomalonate in Aspergillus fumigatus is responsible for the biosynthesis of sphingofungins B and C but not E and F like in Byssochlamys spectabilis. The PKS sphB does not contain any putative thioesterase domain for releasing the nascent polyketide chain and it has been suggested that aminoacyl transferases can facilitate the polyketide chain release. Sphingofungin biosynthesis starts with the PKS sphB that produces an C18 polyketide precursor 3-hydroxyoctadeca-4,10-dienoyl-ACP containing one delta-6 desaturation and one delta-12 desaturation. The aminoacyl transferase sphA uses the sphB product to produce 3-keto-presphingofungin by adding an aminomalonate molecule. SphF then reduces the C-3 ketone of 3-keto-presphingofungin which leads to presphingofungin. The cytochrome P450 monooxygenase sphH converts presphingofungin into sphingofungin B1 which is further converted to sphingofungin B by the dioxygenase sphC. SphC is also able to convert presphingofungin into sphingofungin B2. The acetyltransferase sphE acetylates sphingofungin B to produce sphingofungin C, but can also convert sphingofungin B1 into sphingofungin C1 and sphingofungin B2 into sphingofungin C2. Finally, sphingofungin C can be spontaneously converted into sphingofungin D. The polypeptide is Aminoacyl transferase sphA (Aspergillus fumigatus (strain CBS 144.89 / FGSC A1163 / CEA10) (Neosartorya fumigata)).